Consider the following 73-residue polypeptide: Somatostatin-2 (73 aa).

Residues 1 to 45 constitute a propeptide that is removed on maturation; the sequence is SAGLLTQEWSAVEDLLAQMSLPEADAQRDAEMVSTATGGGRMNQE. Residues 23-58 form a disordered region; sequence EADAQRDAEMVSTATGGGRMNQESIEPPNNLPPRER. A disulfide bridge connects residues Cys62 and Cys73.

Belongs to the somatostatin family.

Its subcellular location is the secreted. Functionally, somatostatin inhibits the release of somatotropin. This is Somatostatin-2 (sst2) from Platichthys flesus (European flounder).